Consider the following 89-residue polypeptide: Small ribosomal subunit protein uS15 (89 aa).

Belongs to the universal ribosomal protein uS15 family. Part of the 30S ribosomal subunit. Forms a bridge to the 50S subunit in the 70S ribosome, contacting the 23S rRNA.

Functionally, one of the primary rRNA binding proteins, it binds directly to 16S rRNA where it helps nucleate assembly of the platform of the 30S subunit by binding and bridging several RNA helices of the 16S rRNA. Its function is as follows. Forms an intersubunit bridge (bridge B4) with the 23S rRNA of the 50S subunit in the ribosome. This chain is Small ribosomal subunit protein uS15, found in Bacteroides fragilis (strain ATCC 25285 / DSM 2151 / CCUG 4856 / JCM 11019 / LMG 10263 / NCTC 9343 / Onslow / VPI 2553 / EN-2).